The primary structure comprises 378 residues: Apoptosis-inducing factor 1 (378 aa).

The helical transmembrane segment at 7–25 threads the bilayer; the sequence is NIVVVGAGVFGVSVANHLY. FAD is bound by residues 12 to 16, R51, K56, and D283; that span reads GAGVF.

This sequence belongs to the FAD-dependent oxidoreductase family. FAD is required as a cofactor.

Its subcellular location is the mitochondrion outer membrane. The protein resides in the nucleus. Its function is as follows. Putative FAD-dependent oxidoreductase involved in the resistance to cercosporin and other singlet oxygen-generating photosensitizers. Translocates from mitochondria to the nucleus under apoptotic conditions, where it degrades DNA and induces apoptosis. The protein is Apoptosis-inducing factor 1 (AIF1) of Saccharomyces cerevisiae (strain ATCC 204508 / S288c) (Baker's yeast).